We begin with the raw amino-acid sequence, 484 residues long: tRNA nucleotidyltransferase cca2 (484 aa).

The short motif at 122–124 (RAE) is the B/A element element. Residues 125–142 (SYDDKSRIPSVTPGTVET) are flexible loop. Positions 234–244 (ERVGEEIEKML) match the ERhxxExxxhh motif motif.

The protein belongs to the tRNA nucleotidyltransferase/poly(A) polymerase family.

Its subcellular location is the cytoplasm. It carries out the reaction a tRNA with a 3' CC end + ATP = a tRNA with a 3' CCA end + diphosphate. In terms of biological role, tRNA nucleotidyltransferase involved in the synthesis of the tRNA CCA terminus. In contrast to what is usually observed in eukaryotes for which one enzyme synthesizes the whole tRNA CCA terminus, in S.pombe, cca1 specifically adds two cytidine residues to a tRNA substrate lacking this sequence while cca2 specifically adds the terminal adenosine residue thereby completing the CCA sequence. The sequence is that of tRNA nucleotidyltransferase cca2 from Schizosaccharomyces pombe (strain 972 / ATCC 24843) (Fission yeast).